A 529-amino-acid chain; its full sequence is Hyaluronidase PH-20 (529 aa).

The N-terminal stretch at 1 to 35 (MGAFTFKHSFFGSFVECSGVLQTVFIFLLIPCCLA) is a signal peptide. 2 disulfide bridges follow: Cys59-Cys351 and Cys223-Cys237. Asn81 carries N-linked (GlcNAc...) asparagine glycosylation. The active-site Proton donor is Glu147. N-linked (GlcNAc...) asparagine glycans are attached at residues Asn165 and Asn179. N-linked (GlcNAc...) asparagine glycans are attached at residues Asn253 and Asn368. 3 disulfide bridges follow: Cys376-Cys387, Cys381-Cys435, and Cys437-Cys464. An N-linked (GlcNAc...) asparagine glycan is attached at Asn401. The segment at 478–502 (DEPPITDDTSQNQDSISDITSSAPP) is disordered. The segment covering 487–502 (SQNQDSISDITSSAPP) has biased composition (polar residues). Ser492 carries the GPI-anchor amidated serine lipid modification. A propeptide spans 493–529 (ISDITSSAPPSSHILPKDLSWCLFLLSIFSQHWKYLL) (removed in mature form).

This sequence belongs to the glycosyl hydrolase 56 family. In terms of processing, endoproteolysis (toward the C-terminus producing two disulfide-linked fragments) could activate PH-20. In terms of tissue distribution, testis.

Its subcellular location is the cell membrane. The catalysed reaction is Random hydrolysis of (1-&gt;4)-linkages between N-acetyl-beta-D-glucosamine and D-glucuronate residues in hyaluronate.. Involved in sperm-egg adhesion. Upon fertilization sperm must first penetrate a layer of cumulus cells that surrounds the egg before reaching the zona pellucida. The cumulus cells are embedded in a matrix containing hyaluronic acid which is formed prior to ovulation. This protein aids in penetrating the layer of cumulus cells by digesting hyaluronic acid. The protein is Hyaluronidase PH-20 (SPAM1) of Cavia porcellus (Guinea pig).